The primary structure comprises 390 residues: Alanine racemase (390 aa).

The active-site Proton acceptor; specific for D-alanine is Lys46. An N6-(pyridoxal phosphate)lysine modification is found at Lys46. Arg144 is a binding site for substrate. Tyr275 acts as the Proton acceptor; specific for L-alanine in catalysis. Residue Met323 coordinates substrate.

This sequence belongs to the alanine racemase family. Pyridoxal 5'-phosphate is required as a cofactor.

It catalyses the reaction L-alanine = D-alanine. It functions in the pathway amino-acid biosynthesis; D-alanine biosynthesis; D-alanine from L-alanine: step 1/1. Its function is as follows. Catalyzes the interconversion of L-alanine and D-alanine. May also act on other amino acids. The protein is Alanine racemase (alr) of Mycolicibacterium vanbaalenii (strain DSM 7251 / JCM 13017 / BCRC 16820 / KCTC 9966 / NRRL B-24157 / PYR-1) (Mycobacterium vanbaalenii).